The chain runs to 89 residues: Small ribosomal subunit protein uS14A (89 aa).

The protein belongs to the universal ribosomal protein uS14 family. In terms of assembly, part of the 30S ribosomal subunit. Contacts proteins S3 and S10.

In terms of biological role, binds 16S rRNA, required for the assembly of 30S particles and may also be responsible for determining the conformation of the 16S rRNA at the A site. The polypeptide is Small ribosomal subunit protein uS14A (Lactococcus lactis subsp. lactis (strain IL1403) (Streptococcus lactis)).